The following is a 241-amino-acid chain: Ubiquinone biosynthesis O-methyltransferase (241 aa).

Residues R46, G66, D87, and M131 each contribute to the S-adenosyl-L-methionine site.

This sequence belongs to the methyltransferase superfamily. UbiG/COQ3 family.

The enzyme catalyses a 3-demethylubiquinol + S-adenosyl-L-methionine = a ubiquinol + S-adenosyl-L-homocysteine + H(+). It catalyses the reaction a 3-(all-trans-polyprenyl)benzene-1,2-diol + S-adenosyl-L-methionine = a 2-methoxy-6-(all-trans-polyprenyl)phenol + S-adenosyl-L-homocysteine + H(+). It participates in cofactor biosynthesis; ubiquinone biosynthesis. Its function is as follows. O-methyltransferase that catalyzes the 2 O-methylation steps in the ubiquinone biosynthetic pathway. In Bordetella parapertussis (strain 12822 / ATCC BAA-587 / NCTC 13253), this protein is Ubiquinone biosynthesis O-methyltransferase.